The primary structure comprises 434 residues: Vi polysaccharide export inner-membrane protein VexD (434 aa).

Residues 1–50 are compositionally biased toward basic and acidic residues; that stretch reads MENSERIKKWKEERAKVAQESRASRLQQKEDERALRQTEKSADAKSHHNP. A disordered region spans residues 1-58; sequence MENSERIKKWKEERAKVAQESRASRLQQKEDERALRQTEKSADAKSHHNPDAGWSATD. The next 2 membrane-spanning stretches (helical) occupy residues 84-104 and 409-429; these read LFLY…ILTS and WLLF…LITI.

This sequence belongs to the BexC/CtrB/KpsE family.

The protein resides in the cell inner membrane. In terms of biological role, may form an ATP-driven capsule polysaccharide export apparatus, in association with the VexA, VexB and VexC proteins. This Salmonella typhi protein is Vi polysaccharide export inner-membrane protein VexD (vexD).